Reading from the N-terminus, the 564-residue chain is Laccase-22 (564 aa).

The first 25 residues, Met-1 to Ser-25, serve as a signal peptide directing secretion. Plastocyanin-like domains lie at Asn-36–Gly-152 and Lys-162–Thr-314. Residues Asn-41 and Asn-82 are each glycosylated (N-linked (GlcNAc...) asparagine). The Cu cation site is built by His-86 and His-88. N-linked (GlcNAc...) asparagine glycosylation is present at Asn-118. His-131 and His-133 together coordinate Cu cation. N-linked (GlcNAc...) asparagine glycans are attached at residues Asn-191, Asn-302, Asn-331, Asn-379, Asn-389, Asn-424, Asn-437, and Asn-447. In terms of domain architecture, Plastocyanin-like 3 spans Asp-414–Lys-548. Residues His-465, His-468, His-470, His-527, Cys-528, His-529, and His-533 each coordinate Cu cation.

The protein belongs to the multicopper oxidase family. Requires Cu cation as cofactor.

The protein resides in the secreted. It is found in the extracellular space. Its subcellular location is the apoplast. It carries out the reaction 4 hydroquinone + O2 = 4 benzosemiquinone + 2 H2O. Lignin degradation and detoxification of lignin-derived products. This is Laccase-22 (LAC22) from Oryza sativa subsp. japonica (Rice).